The sequence spans 82 residues: Small ribosomal subunit protein uS17 (82 aa).

It belongs to the universal ribosomal protein uS17 family. Part of the 30S ribosomal subunit.

Its function is as follows. One of the primary rRNA binding proteins, it binds specifically to the 5'-end of 16S ribosomal RNA. The polypeptide is Small ribosomal subunit protein uS17 (Synechococcus elongatus (strain ATCC 33912 / PCC 7942 / FACHB-805) (Anacystis nidulans R2)).